The chain runs to 596 residues: uncharacterized protein (596 aa).

The helical transmembrane segment at 7–26 threads the bilayer; it reads FWPILLGFTVLVAAGLYYVV.

The protein resides in the membrane. This is an uncharacterized protein from Sinorhizobium fredii (strain NBRC 101917 / NGR234).